A 650-amino-acid polypeptide reads, in one-letter code: Vitrin (650 aa).

The N-terminal stretch at methionine 1 to serine 26 is a signal peptide. An LCCL domain is found at threonine 40–phenylalanine 133. Cystine bridges form between cysteine 46/cysteine 62 and cysteine 66/cysteine 86. Positions arginine 198–glutamate 226 are disordered. 2 VWFA domains span residues aspartate 265–valine 450 and aspartate 467–isoleucine 640. Residue asparagine 492 is glycosylated (N-linked (GlcNAc...) asparagine).

In terms of assembly, binds dermatan sulfate and chondroitin sulfate.

Its subcellular location is the secreted. The protein resides in the extracellular space. It is found in the extracellular matrix. Functionally, promotes matrix assembly and cell adhesiveness. Plays a role in spinal cord formation by regulating the proliferation and differentiation of neural stem cells. The chain is Vitrin (Vit) from Mus musculus (Mouse).